A 139-amino-acid chain; its full sequence is Plastocyanin (139 aa).

The first 34 residues, 1-34 (MKLIAQISRSLSLALFALVLMVGSFVAVMSPAAA), serve as a signal peptide directing secretion. The Plastocyanin-like domain occupies 35–139 (ETFTVKMGAD…GMVGKITVEG (105 aa)). Cu cation-binding residues include His73, Cys123, His126, and Met131.

It belongs to the plastocyanin family. Cu(2+) is required as a cofactor.

Its subcellular location is the cellular thylakoid membrane. Functionally, participates in electron transfer between P700 and the cytochrome b6-f complex in photosystem I. This is Plastocyanin (petE) from Leptolyngbya laminosa (Phormidium laminosum).